A 342-amino-acid chain; its full sequence is HTH-type transcriptional regulator GbpR (342 aa).

The region spanning 16–73 is the HTH lysR-type domain; the sequence is LKLRHLQLFVALDEHRNLHRAAASLTMSQPAASKLLGDLEESLGVTLFERHGRGVEPN. The H-T-H motif DNA-binding region spans 33–52; that stretch reads LHRAAASLTMSQPAASKLLG.

It belongs to the LysR transcriptional regulatory family.

Does not seem to be required for sbpA expression. The protein is HTH-type transcriptional regulator GbpR (gbpR) of Azospirillum brasilense.